A 206-amino-acid chain; its full sequence is Large ribosomal subunit protein uL4 (206 aa).

Residues 47 to 77 (GTHDTKTRGEVSGGGRKPWRQKGTGRARHGS) are disordered. Residues 63–77 (KPWRQKGTGRARHGS) show a composition bias toward basic residues.

The protein belongs to the universal ribosomal protein uL4 family. In terms of assembly, part of the 50S ribosomal subunit.

One of the primary rRNA binding proteins, this protein initially binds near the 5'-end of the 23S rRNA. It is important during the early stages of 50S assembly. It makes multiple contacts with different domains of the 23S rRNA in the assembled 50S subunit and ribosome. Its function is as follows. Forms part of the polypeptide exit tunnel. The protein is Large ribosomal subunit protein uL4 of Carboxydothermus hydrogenoformans (strain ATCC BAA-161 / DSM 6008 / Z-2901).